The primary structure comprises 146 residues: Large ribosomal subunit protein bL19 (146 aa).

Residues 119-146 (DYRKKGEKGVEKVETTPVSADIETQVAE) form a disordered region.

This sequence belongs to the bacterial ribosomal protein bL19 family.

In terms of biological role, this protein is located at the 30S-50S ribosomal subunit interface and may play a role in the structure and function of the aminoacyl-tRNA binding site. The chain is Large ribosomal subunit protein bL19 from Bartonella tribocorum (strain CIP 105476 / IBS 506).